Reading from the N-terminus, the 119-residue chain is Large ribosomal subunit protein bL20 (119 aa).

Belongs to the bacterial ribosomal protein bL20 family.

Functionally, binds directly to 23S ribosomal RNA and is necessary for the in vitro assembly process of the 50S ribosomal subunit. It is not involved in the protein synthesizing functions of that subunit. In Listeria innocua serovar 6a (strain ATCC BAA-680 / CLIP 11262), this protein is Large ribosomal subunit protein bL20.